Here is a 101-residue protein sequence, read N- to C-terminus: RNA-binding protein Hfq (101 aa).

Residues 9–68 (DPFLNALRRERVPVSIYLVNGIKLQGQVESFDQFVILLKNTVSQMVYKHAISTVVPSPPV) enclose the Sm domain. The tract at residues 62–101 (VVPSPPVSHHSNTPSGSTNNYHGSNPSAPQQPQQDSDDAE) is disordered. A compositionally biased stretch (polar residues) spans 70–86 (HHSNTPSGSTNNYHGSN).

It belongs to the Hfq family. As to quaternary structure, homohexamer.

Functionally, RNA chaperone that binds small regulatory RNA (sRNAs) and mRNAs to facilitate mRNA translational regulation in response to envelope stress, environmental stress and changes in metabolite concentrations. Also binds with high specificity to tRNAs. The chain is RNA-binding protein Hfq from Yersinia pestis (strain Pestoides F).